The sequence spans 428 residues: MTLNQSIDAYKEAVDLMPGGVNSPVRAFKSVGMNPIFMKEGKGSKIVDIDNNEYIDYVLSWGPLILGHSDERVVKKLQDITAKGTSFGAPTLLENDLAKLVIDRVPSIEMVRMVNSGTEATMSAIRLARGYTDRDLILKFEGSYHGHGDSLLIKAGSGVATLGLPDSPGVPENIAKNTITVPYNDTDSLKLAFENYGDRIAAIIMEPVCGNMGVVPPKDGFLQYVRHITEENGSLLIFDEVMTGFRVGYHCAQGHYDVTPDLTCLGKVIGGGLPVGAYGGKREIMEQIAPTGPIYQAGTLSGNPLAMTAGYETLSSLSEESYEDINNKVDTLVNGFRDAADKFDIPIHINRAGSMVGVFFTDEEVINFETAQTSNLDYFAQYYRSMVNEGIFLPPSQFEGLFLSTAHTDDDIEKTVKAIHKAFEQIEK.

At K267 the chain carries N6-(pyridoxal phosphate)lysine.

The protein belongs to the class-III pyridoxal-phosphate-dependent aminotransferase family. HemL subfamily. In terms of assembly, homodimer. Requires pyridoxal 5'-phosphate as cofactor.

It localises to the cytoplasm. The enzyme catalyses (S)-4-amino-5-oxopentanoate = 5-aminolevulinate. It participates in porphyrin-containing compound metabolism; protoporphyrin-IX biosynthesis; 5-aminolevulinate from L-glutamyl-tRNA(Glu): step 2/2. This chain is Glutamate-1-semialdehyde 2,1-aminomutase 2, found in Oceanobacillus iheyensis (strain DSM 14371 / CIP 107618 / JCM 11309 / KCTC 3954 / HTE831).